The primary structure comprises 142 residues: Arginine decarboxylase proenzyme (142 aa).

Serine 81 (schiff-base intermediate with substrate; via pyruvic acid) is an active-site residue. The residue at position 81 (serine 81) is a Pyruvic acid (Ser); by autocatalysis. The active-site Proton acceptor; for processing activity is histidine 86. The active-site Proton donor; for catalytic activity is the cysteine 101.

It belongs to the prokaryotic AdoMetDC family. Type 1 subfamily. As to quaternary structure, heterooctamer of four alpha and four beta chains arranged as a tetramer of alpha/beta heterodimers. Requires pyruvate as cofactor. Post-translationally, is synthesized initially as an inactive proenzyme. Formation of the active enzyme involves a self-maturation process in which the active site pyruvoyl group is generated from an internal serine residue via an autocatalytic post-translational modification. Two non-identical subunits are generated from the proenzyme in this reaction, and the pyruvate is formed at the N-terminus of the alpha chain, which is derived from the carboxyl end of the proenzyme. The post-translation cleavage follows an unusual pathway, termed non-hydrolytic serinolysis, in which the side chain hydroxyl group of the serine supplies its oxygen atom to form the C-terminus of the beta chain, while the remainder of the serine residue undergoes an oxidative deamination to produce ammonia and the pyruvoyl group blocking the N-terminus of the alpha chain.

The catalysed reaction is L-arginine + H(+) = agmatine + CO2. The protein operates within amine and polyamine biosynthesis; agmatine biosynthesis; agmatine from L-arginine: step 1/1. In terms of biological role, specifically catalyzes the decarboxylation of L-arginine to agmatine. Has no S-adenosylmethionine decarboxylase (AdoMetDC) activity. The protein is Arginine decarboxylase proenzyme of Hyperthermus butylicus (strain DSM 5456 / JCM 9403 / PLM1-5).